A 445-amino-acid polypeptide reads, in one-letter code: Ribosomal protein uS12 methylthiotransferase RimO (445 aa).

The MTTase N-terminal domain occupies 4–119; the sequence is LKFGLVSLGC…LDDAIEDFFN (116 aa). The [4Fe-4S] cluster site is built by Cys13, Cys48, Cys82, Cys156, Cys160, and Cys163. The Radical SAM core domain maps to 142–372; the sequence is TTGEYSSYVR…MLIQQQVSKN (231 aa). The region spanning 375–441 is the TRAM domain; the sequence is AKKIGKVYKV…EYDLIGVVYN (67 aa).

Belongs to the methylthiotransferase family. RimO subfamily. Requires [4Fe-4S] cluster as cofactor.

It is found in the cytoplasm. The enzyme catalyses L-aspartate(89)-[ribosomal protein uS12]-hydrogen + (sulfur carrier)-SH + AH2 + 2 S-adenosyl-L-methionine = 3-methylsulfanyl-L-aspartate(89)-[ribosomal protein uS12]-hydrogen + (sulfur carrier)-H + 5'-deoxyadenosine + L-methionine + A + S-adenosyl-L-homocysteine + 2 H(+). Functionally, catalyzes the methylthiolation of an aspartic acid residue of ribosomal protein uS12. This Clostridium acetobutylicum (strain ATCC 824 / DSM 792 / JCM 1419 / IAM 19013 / LMG 5710 / NBRC 13948 / NRRL B-527 / VKM B-1787 / 2291 / W) protein is Ribosomal protein uS12 methylthiotransferase RimO.